The sequence spans 4857 residues: MVTGGGAAPPGTVTEPLPSVIVLSAGRKMAAAAAAASGPGCSSAAGAGAAGVSEWLVLRDGCMHCDADGLHSLSYHPALNAILAVTSRGTIKVIDGTSGATLQASALSAKPGGQVKCQYISAVDKVIFVDDYAVGCRKDLNGILLLDTALQTPVSKQDDVVQLELPVTEAQQLLSACLEKVDISSTEGYDLFITQLKDGLKNTSHETAANHKVAKWATVTFHLPHHVLKSIASAIVNELKKINQNVAALPVASSVMDRLSYLLPSARPELGVGPGRSVDRSLMYSEANRRETFTSWPHVGYRWAQPDPMAQAGFYHQPASSGDDRAMCFTCSVCLVCWEPTDEPWSEHERHSPNCPFVKGEHTQNVPLSVTLATSPAQFPCTDGTDRISCFGSGSCPHFLAAATKRGKICIWDVSKLMKVHLKFEINAYDPAIVQQLILSGDPSSGVDSRRPTLAWLEDSSSCSDIPKLEGDSDDLLEDSDSEEHSRSDSVTGHTSQKEAMEVSLDITALSILQQPEKLQWEIVANVLEDTVKDLEELGANPCLTNSKSEKTKEKHQEQHNIPFPCLLAGGLLTYKSPATSPISSNSHRSLDGLSRTQGESISEQGSTDNESCTNSELNSPLVRRTLPVLLLYSIKESDEKAGKIFSQMNNIMSKSLHDDGFTVPQIIEMELDSQEQLLLQDPPVTYIQQFADAAANLTSPDSEKWNSVFPKPGTLVQCLRLPKFAEEENLCIDSITPCADGIHLLVGLRTCPVESLSAINQVEALNNLNKLNSALCNRRKGELESNLAVVNGANISVIQHESPADVQTPLIIQPEQRNVSGGYLVLYKMNYATRIVTLEEEPIKIQHIKDPQDTITSLILLPPDILDNREDDCEEPIEDMQLTSKNGFEREKTSDISTLGHLVITTQGGYVKILDLSNFEILAKVEPPKKEGTEEQDTFVSVIYCSGTDRLCACTKGGELHFLQIGGTCDDIDEADILVDGSLSKGIEPSSEGSKPLSNPSSPGISGVDLLVDQPFTLEILTSLVELTRFETLTPRFSATVPPCWVEVQQEQQQRRHPQHLHQQHHGDAAQHTRTWKLQTDSNSWDEHVFELVLPKACMVGHVDFKFVLNSNITNIPQIQVTLLKNKAPGLGKVNALNIEVEQNGKPSLVDLNEEMQHMDVEESQCLRLCPFLEDHKEDILCGPVWLASGLDLSGHAGMLTLTSPKLVKGMAGGKYRSFLIHVKAVNERGTEEICNGGMRPVVRLPSLKHQSNKGYSLASLLAKVAAGKEKSSNVKNENTSGTRKSENLRGCDLLQEVSVTIRRFKKTSISKERVQRCAMLQFSEFHEKLLNTLCRKTDDGQITEHAQSLVLDTLCWLAGVHSNGPGSSKEGNENLLSKTRKFLSDIVRVCFFEAGRSIAHKCARFLALCISNGKCDPCQPAFGPVLLKALLDNMSFLPAATTGGSVYWYFVLLNYVKDEDLAGCSTACASLLTAVSRQLQDRLTPMEALLQTRYGLYSSPFDPVLFDLEMSGSSCKNVYNSSIGVQSDEIDLSDVLSGNGKVSSCTAAEGSFTSLTGLLEVEPLHFTCVSTSDGTRIERDDAMSSFGVTPAVGGLSSGTVGEASTALSSAAQVALQSLSHAMASAEQQLQVLQEKQQQLLKLQQQKAKLEAKLHQTTAAAAAAASAVGPVHNSVPSNPVAAPGFFIHPSDVIPPTPKTTPLFMTPPLTPPNEAVSVVINAELAQLFPGSVIDPPAVNLAAHNKNSNKSRMNPLGSGLALAISHASHFLQPPPHQSIIIERMHSGARRFVTLDFGRPILLTDVLIPTCGDLASLSIDIWTLGEEVDGRRLVVATDISTHSLILHDLIPPPVCRFMKITVIGRYGSTNARAKIPLGFYYGHTYILPWESELKLMHDPLKGEGESANQPEIDQHLAMMVALQEDIQCRYNLACHRLETLLQSIDLPPLNSANNAQYFLRKPDKAVEEDSRVFSAYQDCIQLQLQLNLAHNAVQRLKVALGASRKMLSETSNPEDLIQTSSTEQLRTIIRYLLDTLLSLLHASNGHSVPAVLQSTFHAQACEELFKHLCISGTPKIRLHTGLLLVQLCGGERWWGQFLSNVLQELYNSEQLLIFPQDRVFMLLSCIGQRSLSNSGVLESLLNLLDNLLSPLQPQLPMHRRTEGVLDIPMISWVVMLVSRLLDYVATVEDEAAAAKKPLNGNQWSFINNNLHTQSLNRSSKGSSSLDRLYSRKIRKQLVHHKQQLNLLKAKQKALVEQMEKEKIQSNKGSSYKLLVEQAKLKQATSKHFKDLIRLRRTAEWSRSNLDTEVTTAKESPEIEPLPFTLAHERCISVVQKLVLFLLSMDFTCHADLLLFVCKVLARIANATRPTIHLCEIVNEPQLERLLLLLVGTDFNRGDISWGGAWAQYSLTCMLQDILAGELLAPVAAEAMEEGTVGDDVGATAGDSDDSLQQSSVQLLETIDEPLTHDITGAPPLSSLEKDKEIDLELLQDLMEVDIDPLDIDLEKDPLAAKVFKPISSTWYDYWGADYGTYNYNPYIGGLGIPVAKPPANTEKNGSQTVSVSVSQALDARLEVGLEQQAELMLKMMSTLEADSILQALTNTSPTLSQSPTGTDDSLLGGLQAANQTSQLIIQLSSVPMLNVCFNKLFSMLQVHHVQLESLLQLWLTLSLNSSSTGNKENGADIFLYNANRIPVISLNQASITSFLTVLAWYPNTLLRTWCLVLHSLTLMTNMQLNSGSSSAIGTQESTAHLLVSDPNLIHVLVKFLSGTSPHGTNQHSPQVGPTATQAMQEFLTRLQVHLSSTCPQIFSEFLLKLIHILSTERGAFQTGQGPLDAQVKLLEFTLEQNFEVVSVSTISAVIESVTFLVHHYITCSDKVMSRSGSDSSVGARACFGGLFANLIRPGDAKAVCGEMTRDQLMFDLLKLVNILVQLPLSGNREYSARVSVTTNTTDSVSDEEKVSGGKDGNGSSTSVQGSPAYVADLVLANQQIMSQILSALGLCNSSAMAMIIGASGLHLTKHENFHGGLDAISVGDGLFTILTTLSKKASTVHMMLQPILTYMACGYMGRQGSLATCQLSEPLLWFILRVLDTSDALKAFHDMGGVQLICNNMVTSTRAIVNTARSMVSTIMKFLDSGPNKAVDSTLKTRILASEPDNAEGIHNFAPLGTITSSSPTAQPAEVLLQATPPHRRARSAAWSYIFLPEEAWCDLTIHLPAAVLLKEIHIQPHLASLATCPSSVSVEVSADGVNMLPLSTPVVTSGLTYIKIQLVKAEVASAVCLRLHRPRDASTLGLSQIKLLGLTAFGTTSSATVNNPFLPSEDQVSKTSIGWLRLLHHCLTHISDLEGMMASAAAPTANLLQTCAALLMSPYCGMHSPNIEVVLVKIGLQSTRIGLKLIDILLRNCAASGSDPTDLNSPLLFGRLNGLSSDSTIDILYQLGTTQDPGTKDRIQALLKWVSDSARVAAMKRSGRMNYMCPNSSTVEYGLLMPSPSHLHCVAAILWHSYELLVEYDLPALLDQELFELLFNWSMSLPCNMVLKKAVDSLLCSMCHVHPNYFSLLMGWMGITPPPVQCHHRLSMTDDSKKQDLSSSLTDDSKNAQAPLALTESHLATLASSSQSPEAIKQLLDSGLPSLLVRSLASFCFSHISSSESIAQSIDISQDKLRRHHVPQQCNKMPITADLVAPILRFLTEVGNSHIMKDWLGGSEVNPLWTALLFLLCHSGSTSGSHNLGAQQTSARSASLSSAATTGLTTQQRTAIENATVAFFLQCISCHPNNQKLMAQVLCELFQTSPQRGNLPTSGNISGFIRRLFLQLMLEDEKVTMFLQSPCPLYKGRINATSHVIQHPMYGAGHKFRTLHLPVSTTLSDVLDRVSDTPSITAKLISEQKDDKEKKNHEEKEKVKAENGFQDNYSVVVASGLKSQSKRAVSATPPRPPSRRGRTIPDKIGSTSGAEAANKIITVPVFHLFHKLLAGQPLPAEMTLAQLLTLLYDRKLPQGYRSIDLTVKLGSRVITDPSLSKTDSYKRLHPEKDHGDLLASCPEDEALTPGDECMDGILDESLLETCPIQSPLQVFAGMGGLALIAERLPMLYPEVIQQVSAPVVTSTTQEKPKDSDQFEWVTIEQSGELVYEAPETVAAEPPPIKSAVQTMSPIPAHSLAAFGLFLRLPGYAEVLLKERKHAQCLLRLVLGVTDDGEGSHILQSPSANVLPTLPFHVLRSLFSTTPLTTDDGVLLRRMALEIGALHLILVCLSALSHHSPRVPNSSVNQTEPQVSSSHNPTSTEEQQLYWAKGTGFGTGSTASGWDVEQALTKQRLEEEHVTCLLQVLASYINPVSSAVNGEAQSSHETRGQNSNALPSVLLELLSQSCLIPAMSSYLRNDSVLDMARHVPLYRALLELLRAIASCAAMVPLLLPLSTENGEEEEEQSECQTSVGTLLAKMKTCVDTYTNRLRSKRENVKTGVKPDASDQEPEGLTLLVPDIQKTAEIVYAATTSLRQANQEKKLGEYSKKAAMKPKPLSVLKSLEEKYVAVMKKLQFDTFEMVSEDEDGKLGFKVNYHYMSQVKNANDANSAARARRLAQEAVTLSTSLPLSSSSSVFVRCDEERLDIMKVLITGPADTPYANGCFEFDVYFPQDYPSSPPLVNLETTGGHSVRFNPNLYNDGKVCLSILNTWHGRPEEKWNPQTSSFLQVLVSVQSLILVAEPYFNEPGYERSRGTPSGTQSSREYDGNIRQATVKWAMLEQIRNPSPCFKEVIHKHFYLKRVEIMAQCEEWIADIQQYSSDKRVGRTMSHHAAALKRHTAQLREELLKLPCPEGLDPDTDDAPEVCRATTGAEETLMHDQVKPSSSKELPSDFQL.

WD repeat units follow at residues 68–106 and 107–136; these read DGLH…QASA and LSAK…AVGC. The stretch at 268–377 is one BIR repeat; it reads PELGVGPGRS…LSVTLATSPA (110 aa). The Zn(2+) site is built by Cys328, Cys331, His348, and Cys355. The WD 3 repeat unit spans residues 379–426; that stretch reads FPCTDGTDRISCFGSGSCPHFLAAATKRGKICIWDVSKLMKVHLKFEI. Disordered regions lie at residues 465-498 and 579-618; these read DIPK…TSQK and ATSP…NSEL. Positions 472 to 482 are enriched in acidic residues; it reads DSDDLLEDSDS. 5 positions are modified to phosphoserine: Ser473, Ser480, Ser482, Ser581, and Ser590. 4 WD repeats span residues 501 to 720, 730 to 850, 851 to 927, and 928 to 966; these read MEVS…VQCL, NLCI…QHIK, DPQD…AKVE, and PPKK…FLQI. Positions 579 to 588 are enriched in polar residues; sequence ATSPISSNSH. Polar residues predominate over residues 595-618; that stretch reads SRTQGESISEQGSTDNESCTNSEL. Disordered stretches follow at residues 984–1004 and 1053–1073; these read LSKG…PSSP and QQQR…AAQH. Residues 992–1004 are compositionally biased toward polar residues; that stretch reads SEGSKPLSNPSSP. Positions 1056-1065 are enriched in basic residues; it reads RRHPQHLHQQ. At Thr1710 the chain carries Phosphothreonine. Phosphoserine is present on residues Ser2222 and Ser2955. The segment at 2945-2973 is disordered; sequence SVTTNTTDSVSDEEKVSGGKDGNGSSTSV. Positions 3189–3193 are HRRAR loop; important for DIABLO/SMAC and HTRA2 binding; sequence HRRAR. Residues 3819 to 4068 form the Ubiquitin-like domain; the sequence is DEKVTMFLQS…ESLLETCPIQ (250 aa). The tract at residues 3923-3949 is disordered; the sequence is QSKRAVSATPPRPPSRRGRTIPDKIGS. Position 3931 is a phosphothreonine (Thr3931). Ser4023 is subject to Phosphoserine. The tract at residues 4260–4283 is disordered; sequence RVPNSSVNQTEPQVSSSHNPTSTE. A compositionally biased stretch (polar residues) spans 4261 to 4283; it reads VPNSSVNQTEPQVSSSHNPTSTE. Residues 4573–4740 enclose the UBC core domain; that stretch reads ARARRLAQEA…IRQATVKWAM (168 aa). The Glycyl thioester intermediate role is filled by Cys4666. Residues 4835–4857 form a disordered region; the sequence is EETLMHDQVKPSSSKELPSDFQL. Residues 4844-4857 are compositionally biased toward polar residues; sequence KPSSSKELPSDFQL.

This sequence belongs to the BIRC6 family. As to quaternary structure, homodimer; antiparallel. Interacts with RNF41. Interacts with DIABLO/SMAC, likely with higher affinity to SMAC dimer than SMAC monomer; this interaction blocks the substrate-binding site and inhibits the caspase inhibition activity of BIRC6. Interacts with KIF23/MKLP1, USP8/UBPY, BIRC5/survivin, MAP2K1/MEK1, RAB8A/RAB8, RAB11A/RAB11, PLK1, EXOC3/SEC6 and EXOC4/SEC8. Post-translationally, ubiquitinated; mediated by RNF41 E3 ligase and leads to proteasomal degradation, impairing inhibition of apoptosis. Deubiquitinated by USP8/UBPY. Autoubiquitinated; mediated by E1 ubiquitin activating enzyme UBA6. Proteolytically cleaved. Acts as substrate for CASP3, CASP6, CASP7, CASP9 and HTRA2. In terms of tissue distribution, expressed in brain cancer cells.

Its subcellular location is the golgi apparatus. The protein resides in the trans-Golgi network membrane. The protein localises to the endosome. It is found in the cytoplasm. It localises to the cytoskeleton. Its subcellular location is the spindle pole. The protein resides in the microtubule organizing center. The protein localises to the centrosome. It is found in the midbody. It localises to the midbody ring. It carries out the reaction S-ubiquitinyl-[E1 ubiquitin-activating enzyme]-L-cysteine + [acceptor protein]-L-lysine = [E1 ubiquitin-activating enzyme]-L-cysteine + N(6)-monoubiquitinyl-[acceptor protein]-L-lysine.. With respect to regulation, inhibited by DIABLO/SMAC, which competes for the substrate-binding sites on BIRC6. BIRC6 inhibits caspases and protease by ubiquitination but BIRC6 itself is subjected to protease cleavage by CASP3, CASP6, CASP7, CASP9 and HTRA2 by protease cleavage. Functionally, anti-apoptotic protein known as inhibitor of apoptosis (IAP) which can regulate cell death by controlling caspases and by acting as an E3 ubiquitin-protein ligase. Unlike most IAPs, does not contain a RING domain and it is not a RING-type E3 ligase. Instead acts as a dual E2/E3 enzyme that combines ubiquitin conjugating (E2) and ubiquitin ligase (E3) activities in a single polypeptide. Ubiquitination is mediated by a non-canonical E1 ubiquitin activating enzyme UBA6. Ubiquitinates CASP3, CASP7 and CASP9 and inhibits their caspase activity; also ubiquitinates their procaspases but to a weaker extent. Ubiquitinates pro-apoptotic factors DIABLO/SMAC and HTRA2. DIABLO/SMAC antagonizes the caspase inhibition activity of BIRC6 by competing for the same binding sites as the caspases. Ubiquitinates the autophagy protein MAP1LC3B; this activity is also inhibited by DIABLO/SMAC. Important regulator for the final stages of cytokinesis. Crucial for normal vesicle targeting to the site of abscission, but also for the integrity of the midbody and the midbody ring, and its striking ubiquitin modification. In Homo sapiens (Human), this protein is Dual E2 ubiquitin-conjugating enzyme/E3 ubiquitin-protein ligase BIRC6 (BIRC6).